Reading from the N-terminus, the 186-residue chain is Cell division protein ZapC (186 aa).

This sequence belongs to the ZapC family. As to quaternary structure, interacts directly with FtsZ.

It is found in the cytoplasm. In terms of biological role, contributes to the efficiency of the cell division process by stabilizing the polymeric form of the cell division protein FtsZ. Acts by promoting interactions between FtsZ protofilaments and suppressing the GTPase activity of FtsZ. This is Cell division protein ZapC from Musicola paradisiaca (strain Ech703) (Dickeya paradisiaca).